A 711-amino-acid chain; its full sequence is MND1-interacting protein 1 (711 aa).

Positions 390–648 (EWAQKNAMQA…LEGSYDNEAN (259 aa)) form a coiled coil. Disordered regions lie at residues 552-571 (EALAQMEEEQRSKEAAEGHN) and 602-622 (RLKASSDSDSSHISNNAWKPK). Residues 602 to 611 (RLKASSDSDS) show a composition bias toward basic and acidic residues. The RING-type zinc-finger motif lies at 653–697 (CIICMKDEVSVVFLPCAHQVVCGSCSDSFFASNNGGSKVTCPCCR).

Interacts (via C-terminal domain) with MND1 and HOP2. Interacts with XRI1 (via C-terminal domain).

The polypeptide is MND1-interacting protein 1 (MIP1) (Arabidopsis thaliana (Mouse-ear cress)).